The primary structure comprises 1279 residues: MSISLKINIVGANTVKTLRFAPDMCIQECCTHIFEKTNEGGPDHGLYQAHIEGKQSARWLAMEKTLQFYDINSDQQLDYKKKHRPQKFKLLDGTIKTQLVDESQNVSEIVNSICKKMGIKNPEEYSLMNSAGAWLNNTQILSEQGISENDITVLMKKFFFNDANIDRNDPVQLHLLFVQCRDGIIEGKYPTQREESLALSALQCQVQLGDYNPTKHVPGFLTLKDYLPLQWLKSKGVEKDIFKEHKKLVSMTEVNAKYRYVQLCRSLKTYGMTSFDVKIREYGKKKMVDHILGITREQMLLMLTETKEVIMTHPLKHIKRWAATDKSFTLDFGDHETEYLILQTPNPEQISQLIGGYIEIIMKARKDSSKVIEKEDTAMGVEEVMAVKKGSVANSSSYMGYGAGGGGANQLQPSQQIPITDLKSALRATDLLIGELGGFRSSTGATPQNFTRSFTTLTPQQFKHQLISHTNAMAIAAQGLFQDMTTPPPTGGIAAFQQAITKRAQIIMAELNTVGTAAKNAGYFPDMASFSDEIIGVATKLSESMARLLAIGSTIQGTDCDEKSQKAAQTEIFNVQSLVTLMMAACDNEYVTDSSSKLLIECAKNVSAAIADMLVVGNSKVEFIDDELLLGQIQNTLKSTSLTSDELLSTTENLASTSCHPESRKQITNITQSALNQSNALLTAFKSGEIPEQDYNLLNARVSDIIESVNLINYAMDCSEREYKISITSNGVEVGEGEILAGTNLTEEFATVANDLTNAIMTMRSNLKNPDTVMESYKMVAGHANRLITCTKAVASRADTQSQQRLFNSTNAVFESVANLSNHCRSYIKNPEQEAHTFQIVETAGHLQFLTQNMSTDAGKIACITSLRDYSKEMIAQVSSLISTSRTSSQYLPDANGITLLKGAKDVSDALSKLMVGIKKVVLDPKSEATQMELLTLAQKQSLPPMNLVSTCKRFAPKISDPNQKQRLIFSSDAAAQSVQKLMKAGEAYKRICGHIEIEEALEVFDSTIADLETTEIAIAGGFLDAVSGTTREGAAELLMVAIKDLNKVNNELVTDIRVNPARLGDLVKSATESASSVAISAKTLICATTGKQVQKKLMGITKQLMIDMEQLIRASRSVASNPNDAASELLLDAASNDVSISTAALVGSTANVDCKELDEASADISNLLSLKMGSLESILSQPTEEFAFYVEEIASSTKALNAASQQVVAMARNKNLKGLGASAKITASALSTLVSHAQNAIVLTENEATKNAILASTVALGGQIIGLLDFSKARIANY.

The FERM domain occupies 84-365 (RPQKFKLLDG…GYIEIIMKAR (282 aa)).

Its subcellular location is the cytoplasm. The protein localises to the cytoskeleton. The protein resides in the cell cortex. Its function is as follows. Actin-binding protein that may be involved in the control of cell motility and chemotaxis. This Dictyostelium discoideum (Social amoeba) protein is Talin-A (talA).